Reading from the N-terminus, the 669-residue chain is Leucine zipper putative tumor suppressor 2 (669 aa).

Low complexity predominate over residues 1 to 25; it reads MAIVQTLPVPLEPAPEAATAPQAPV. Disordered regions lie at residues 1-56, 92-131, 150-201, and 215-323; these read MAIV…PTFF, NEDFRTESPPSPSSDVEDAREQRAHNAHLRGPPPKLIPVS, PVLP…AADK, and GTLS…SDEA. A required for centrosomal localization region spans residues 1-332; that stretch reads MAIVQTLPVP…ALLHCVLEGK (332 aa). Polar residues predominate over residues 172-181; that stretch reads LSGSQGSLTQ. Over residues 187-199 the composition is skewed to low complexity; sequence ASSSSSSSSSSAA. Residues 215-233 are compositionally biased toward polar residues; that stretch reads GTLSDSGRNSLSSLPTYST. Composition is skewed to low complexity over residues 241-251 and 267-283; these read SSPGGHLPSHG and GPSHSDSGRSSSSKSTG. At S249 the chain carries Phosphoserine. Residues 284–295 are compositionally biased toward gly residues; that stretch reads SLGGRVAGGLLG. S296 is subject to Phosphoserine. Positions 298-308 are enriched in polar residues; it reads TRASPDSSSCG. Pro residues predominate over residues 311–320; sequence SPPPPPPPPS. A coiled-coil region spans residues 328–649; sequence VLEGKLRDRE…LELEARELAD (322 aa). Residues 447 to 669 are sufficient for interaction with CTNNB1; sequence SGEISLLKQQ…CLEEITATEI (223 aa). The tract at residues 450 to 669 is sufficient for interaction with KATNB1 and for inhibition of katanin-mediated microtubule severing; sequence ISLLKQQLKE…CLEEITATEI (220 aa). Phosphoserine is present on S570. A Nuclear export signal motif is present at residues 631-640; it reads LEQELQQLSL.

The protein belongs to the LZTS2 family. In terms of assembly, interacts with KATNB1. Also interacts with CTNNB1, gamma-tubulin and KIF23. As to expression, highly expressed in prostate and testis, and at slightly lower levels in spleen, thymus, uterus, small intestine and colon.

It is found in the cytoplasm. It localises to the cytoskeleton. The protein localises to the microtubule organizing center. The protein resides in the centrosome. Negative regulator of katanin-mediated microtubule severing and release from the centrosome. Required for central spindle formation and the completion of cytokinesis. May negatively regulate axonal outgrowth by preventing the formation of microtubule bundles that are necessary for transport within the elongating axon. Negative regulator of the Wnt signaling pathway. Represses beta-catenin-mediated transcriptional activation by promoting the nuclear exclusion of beta-catenin. This chain is Leucine zipper putative tumor suppressor 2, found in Homo sapiens (Human).